The primary structure comprises 176 residues: ATP-dependent protease subunit HslV (176 aa).

The active site involves T2. 3 residues coordinate Na(+): G157, C160, and T163.

The protein belongs to the peptidase T1B family. HslV subfamily. In terms of assembly, a double ring-shaped homohexamer of HslV is capped on each side by a ring-shaped HslU homohexamer. The assembly of the HslU/HslV complex is dependent on binding of ATP.

Its subcellular location is the cytoplasm. The catalysed reaction is ATP-dependent cleavage of peptide bonds with broad specificity.. With respect to regulation, allosterically activated by HslU binding. Functionally, protease subunit of a proteasome-like degradation complex believed to be a general protein degrading machinery. This chain is ATP-dependent protease subunit HslV, found in Salmonella agona (strain SL483).